Here is a 124-residue protein sequence, read N- to C-terminus: 14 kDa phosphohistidine phosphatase (124 aa).

A substrate-binding site is contributed by Lys-20. His-52 serves as the catalytic Proton acceptor. Substrate is bound at residue 93 to 95 (SMG).

It belongs to the janus family. In terms of assembly, monomer.

Its subcellular location is the cytoplasm. It catalyses the reaction N(pros)-phospho-L-histidyl-[protein] + H2O = L-histidyl-[protein] + phosphate. It carries out the reaction N(tele)-phospho-L-histidyl-[protein] + H2O = L-histidyl-[protein] + phosphate. Its function is as follows. Exhibits phosphohistidine phosphatase activity. In Mus musculus (Mouse), this protein is 14 kDa phosphohistidine phosphatase (Phpt1).